The sequence spans 325 residues: Glycerol-3-phosphate dehydrogenase [NAD(P)+] (325 aa).

The NADPH site is built by S14, F15, R35, and K109. Positions 109 and 137 each coordinate sn-glycerol 3-phosphate. An NADPH-binding site is contributed by A141. Sn-glycerol 3-phosphate contacts are provided by K192, D247, S257, R258, and N259. The active-site Proton acceptor is the K192. R258 contributes to the NADPH binding site. Residues L282 and E284 each contribute to the NADPH site.

This sequence belongs to the NAD-dependent glycerol-3-phosphate dehydrogenase family.

The protein localises to the cytoplasm. The enzyme catalyses sn-glycerol 3-phosphate + NAD(+) = dihydroxyacetone phosphate + NADH + H(+). The catalysed reaction is sn-glycerol 3-phosphate + NADP(+) = dihydroxyacetone phosphate + NADPH + H(+). The protein operates within membrane lipid metabolism; glycerophospholipid metabolism. Catalyzes the reduction of the glycolytic intermediate dihydroxyacetone phosphate (DHAP) to sn-glycerol 3-phosphate (G3P), the key precursor for phospholipid synthesis. This chain is Glycerol-3-phosphate dehydrogenase [NAD(P)+], found in Rickettsia conorii (strain ATCC VR-613 / Malish 7).